Here is a 77-residue protein sequence, read N- to C-terminus: U8-lycotoxin-Ls1f (77 aa).

The first 20 residues, 1–20 (MKLIIFTGLVLFAIVSLIEV), serve as a signal peptide directing secretion. A propeptide spanning residues 21 to 26 (QADNER) is cleaved from the precursor.

This sequence belongs to the neurotoxin 19 (CSTX) family. 08 (U8-Lctx) subfamily. In terms of processing, contains 4 disulfide bonds. Expressed by the venom gland.

It localises to the secreted. The protein is U8-lycotoxin-Ls1f of Lycosa singoriensis (Wolf spider).